The primary structure comprises 434 residues: Glycerol-3-phosphate acyltransferase 3 (434 aa).

Residues 14 to 34 form a helical membrane-spanning segment; sequence WLTLVLGFILLPSVFGVSLGI. Phosphoserine is present on residues S68 and S77. The next 2 membrane-spanning stretches (helical) occupy residues 137-157 and 161-181; these read ISLR…CVLL and VTLA…VGQL. The short motif at 229–234 is the HXXXXD motif element; sequence HTSPID.

This sequence belongs to the 1-acyl-sn-glycerol-3-phosphate acyltransferase family. As to expression, widely expressed. Expressed in liver, kidney, testis, brain, heart, skeletal muscle, thyroid, prostate, thymus and placenta. Also expressed lung and adipose tissue.

The protein resides in the endoplasmic reticulum membrane. The catalysed reaction is sn-glycerol 3-phosphate + an acyl-CoA = a 1-acyl-sn-glycero-3-phosphate + CoA. It carries out the reaction a 1-acyl-sn-glycero-3-phosphate + an acyl-CoA = a 1,2-diacyl-sn-glycero-3-phosphate + CoA. It catalyses the reaction dodecanoyl-CoA + sn-glycerol 3-phosphate = 1-dodecanoyl-sn-glycerol 3-phosphate + CoA. The enzyme catalyses sn-glycerol 3-phosphate + hexadecanoyl-CoA = 1-hexadecanoyl-sn-glycero-3-phosphate + CoA. The catalysed reaction is sn-glycerol 3-phosphate + (9Z)-octadecenoyl-CoA = 1-(9Z-octadecenoyl)-sn-glycero-3-phosphate + CoA. It carries out the reaction (9Z,12Z)-octadecadienoyl-CoA + sn-glycerol 3-phosphate = 1-(9Z,12Z)-octadecadienoyl-sn-glycero-3-phosphate + CoA. It catalyses the reaction 1-tetradecanoyl-sn-glycerol 3-phosphate + (9Z)-octadecenoyl-CoA = 1-tetradecanoyl-2-(9Z)-octadecenoyl-sn-glycero-3-phosphate + CoA. The enzyme catalyses 1-hexadecanoyl-sn-glycero-3-phosphate + (9Z)-octadecenoyl-CoA = 1-hexadecanoyl-2-(9Z-octadecenoyl)-sn-glycero-3-phosphate + CoA. The catalysed reaction is 1-(9Z-octadecenoyl)-sn-glycero-3-phosphate + (9Z)-octadecenoyl-CoA = 1,2-di-(9Z-octadecenoyl)-sn-glycero-3-phosphate + CoA. It carries out the reaction 1-(6Z,9Z,12Z-octadecatrienoyl)-sn-glycero-3-phosphate + (9Z)-octadecenoyl-CoA = (6Z,9Z,12Z)-octadecatrienoyl-2-(9Z)-octadecenoyl-sn-glycero-3-phosphate + CoA. It catalyses the reaction 1-(9Z,12Z,15Z)-octadecatrienoyl-sn-glycero-3-phosphate + (9Z)-octadecenoyl-CoA = 1-(9Z,12Z,15Z)-octadecatrienoyl-2-(9Z)-octadecenoyl-sn-glycero-3-phosphate + CoA. The enzyme catalyses 1-(9Z-octadecenoyl)-sn-glycero-3-phosphate + tetradecanoyl-CoA = 1-(9Z)-octadecenoyl-2-tetradecanoyl-sn-glycero-3-phosphate + CoA. The catalysed reaction is 1-(9Z-octadecenoyl)-sn-glycero-3-phosphate + hexadecanoyl-CoA = 1-(9Z)-octadecenoyl-2-hexadecanoyl-sn-glycero-3-phosphate + CoA. It carries out the reaction 1-(9Z-octadecenoyl)-sn-glycero-3-phosphate + octadecanoyl-CoA = 1-(9Z-octadecenoyl)-2-octadecanoyl-sn-glycero-3-phosphate + CoA. It catalyses the reaction 1-(9Z-octadecenoyl)-sn-glycero-3-phosphate + (9Z,12Z)-octadecadienoyl-CoA = 1-(9Z)-octadecenoyl-2-(9Z,12Z)-octadecadienoyl-sn-glycero-3-phosphate + CoA. The enzyme catalyses 1-(5Z,8Z,11Z,14Z-eicosatetraenoyl)-sn-glycero-3-phosphate + (9Z)-octadecenoyl-CoA = 1-(5Z,8Z,11Z,14Z)-eicosatetraenoyl-2-(9Z)-octadecenoyl-sn-glycero-3-phosphate + CoA. It participates in glycerolipid metabolism; triacylglycerol biosynthesis. It functions in the pathway phospholipid metabolism; CDP-diacylglycerol biosynthesis; CDP-diacylglycerol from sn-glycerol 3-phosphate: step 1/3. With respect to regulation, inhibited by N-ethylmaleimide (NEM). Functionally, converts glycerol-3-phosphate to 1-acyl-sn-glycerol-3-phosphate (lysophosphatidic acid or LPA) by incorporating an acyl moiety at the sn-1 position of the glycerol backbone. Also converts LPA into 1,2-diacyl-sn-glycerol-3-phosphate (phosphatidic acid or PA) by incorporating an acyl moiety at the sn-2 position of the glycerol backbone. Protects cells against lipotoxicity. The sequence is that of Glycerol-3-phosphate acyltransferase 3 from Homo sapiens (Human).